Consider the following 207-residue polypeptide: Large ribosomal subunit protein uL4 (207 aa).

Residues 44-71 (RRQGTQSAKTRAEVRGGGRKPWKQKGTG) form a disordered region. Over residues 60-71 (GGRKPWKQKGTG) the composition is skewed to basic residues.

It belongs to the universal ribosomal protein uL4 family. In terms of assembly, part of the 50S ribosomal subunit.

One of the primary rRNA binding proteins, this protein initially binds near the 5'-end of the 23S rRNA. It is important during the early stages of 50S assembly. It makes multiple contacts with different domains of the 23S rRNA in the assembled 50S subunit and ribosome. In terms of biological role, forms part of the polypeptide exit tunnel. The chain is Large ribosomal subunit protein uL4 from Alkaliphilus oremlandii (strain OhILAs) (Clostridium oremlandii (strain OhILAs)).